The following is a 1023-amino-acid chain: Sodium/potassium-transporting ATPase subunit alpha-1 (1023 aa).

A propeptide spanning residues 1–5 is cleaved from the precursor; sequence MGKGV. The span at 1–11 shows a compositional bias: basic and acidic residues; sequence MGKGVGRDKYE. Residues 1–39 form a disordered region; it reads MGKGVGRDKYEPAAVSEHGDKKGKKAKKERDMDELKKEV. At 6–96 the chain is on the cytoplasmic side; it reads GRDKYEPAAV…PEWVKFCRQL (91 aa). The residue at position 9 (Lys-9) is an N6-acetyllysine. Tyr-10 bears the Phosphotyrosine mark. Ser-16 is subject to Phosphoserine. Lys-21 is modified (N6-acetyllysine). The span at 28–39 shows a compositional bias: basic and acidic residues; the sequence is KERDMDELKKEV. 2 positions are modified to phosphoserine: Ser-40 and Ser-47. Positions 82–84 are phosphoinositide-3 kinase binding; it reads PPP. The helical transmembrane segment at 97–117 threads the bilayer; sequence FGGFSMLLWIGAILCFLAYGI. Residues 118–129 are Extracellular-facing; the sequence is RSATEEEPPNDD. A helical membrane pass occupies residues 130-150; it reads LYLGVVLSAVVIITGCFSYYQ. Residues 151-291 are Cytoplasmic-facing; the sequence is EAKSSKIMES…TPIAEEIEHF (141 aa). The tract at residues 216 to 235 is disordered; the sequence is SSLTGESEPQTRSPDFTNEN. Residue Ser-228 is modified to Phosphoserine. Position 260 is a phosphotyrosine (Tyr-260). The chain crosses the membrane as a helical span at residues 292 to 312; it reads IHLITGVAVFLGVSFFILSLI. Residues 313–319 are Extracellular-facing; the sequence is LEYTWLE. Residues 320 to 340 traverse the membrane as a helical segment; that stretch reads AVIFLIGIIVANVPEGLLATV. Residues 341–775 lie on the Cytoplasmic side of the membrane; sequence TVCLTLTAKR…RLIFDNLKKS (435 aa). Asp-376 acts as the 4-aspartylphosphate intermediate in catalysis. 2 positions are modified to phosphoserine: Ser-452 and Ser-484. An ATP-binding site is contributed by Lys-487. Tyr-542 is subject to Phosphotyrosine. The tract at residues 596–717 is mediates interaction with SCN7A; sequence RAAVPDAVGK…QGAIVAVTGD (122 aa). Residue Lys-661 is modified to N6-succinyllysine. Phosphoserine occurs at positions 668 and 675. Residues Asp-717 and Asp-721 each contribute to the Mg(2+) site. The chain crosses the membrane as a helical span at residues 776 to 798; the sequence is IAYTLTSNIPEITPFLIFIIANI. The Extracellular segment spans residues 799-801; sequence PLP. The helical transmembrane segment at 802–824 threads the bilayer; the sequence is LGTVTILCIDLGTDMVPAISLAY. Residues 825–849 are Cytoplasmic-facing; sequence EQAESDIMKRQPRNPKTDKLVNERL. Residues 850–872 traverse the membrane as a helical segment; the sequence is ISMAYGQIGMIQALGGFFTYFVI. The Extracellular portion of the chain corresponds to 873-915; the sequence is LAENGFLPFHLLGIRETWDDRWVNDVEDSYGQQWTYEQRKIVE. A helical transmembrane segment spans residues 916–936; that stretch reads FTCHTAFFVSIVVVQWADLVI. Over 937–952 the chain is Cytoplasmic; sequence CKTRRNSVFQQGMKNK. The residue at position 943 (Ser-943) is a Phosphoserine; by PKA. The helical transmembrane segment at 953–973 threads the bilayer; it reads ILIFGLFEETALAAFLSYCPG. At 974–979 the chain is on the extracellular side; it reads MGAALR. A helical transmembrane segment spans residues 980 to 1000; sequence MYPLKPTWWFCAFPYSLLIFV. At 1001–1023 the chain is on the cytoplasmic side; the sequence is YDEVRKLIIRRRPGGWVEKETYY.

This sequence belongs to the cation transport ATPase (P-type) (TC 3.A.3) family. Type IIC subfamily. In terms of assembly, the sodium/potassium-transporting ATPase is composed of a catalytic alpha subunit, an auxiliary non-catalytic beta subunit and an additional regulatory subunit. Interacts with regulatory subunit FXYD1. Interacts with regulatory subunit FXYD3. Interacts with SIK1. Interacts with SLC35G1 and STIM1. Interacts with CLN3; this interaction regulates the sodium/potassium-transporting ATPase complex localization at the plasma membrane. Interacts with SCN7A; activates ATP1A1 P-type sodium:potassium-exchanging transporter activity which indirectly signals to nearby neurons to regulate sodium homeostasis. Phosphorylation on Tyr-10 modulates pumping activity. Phosphorylation of Ser-943 by PKA modulates the response of ATP1A1 to PKC. Dephosphorylation by protein phosphatase 2A (PP2A) following increases in intracellular sodium, leading to increase catalytic activity.

Its subcellular location is the cell membrane. The protein resides in the basolateral cell membrane. The protein localises to the sarcolemma. It is found in the cell projection. It localises to the axon. Its subcellular location is the melanosome. It catalyses the reaction K(+)(out) + Na(+)(in) + ATP + H2O = K(+)(in) + Na(+)(out) + ADP + phosphate + H(+). This is the catalytic component of the active enzyme, which catalyzes the hydrolysis of ATP coupled with the exchange of sodium and potassium ions across the plasma membrane. This action creates the electrochemical gradient of sodium and potassium ions, providing the energy for active transport of various nutrients. Could also be part of an osmosensory signaling pathway that senses body-fluid sodium levels and controls salt intake behavior as well as voluntary water intake to regulate sodium homeostasis. The polypeptide is Sodium/potassium-transporting ATPase subunit alpha-1 (Atp1a1) (Mus musculus (Mouse)).